Reading from the N-terminus, the 123-residue chain is Probable histone H2B 4 (123 aa).

The interval 1 to 30 is disordered; sequence MPPKPSAKGAKKAAKTVVAKPKDGKKRRHA. A glycan (O-linked (GlcNAc) serine) is linked at S110. K118 participates in a covalent cross-link: Glycyl lysine isopeptide (Lys-Gly) (interchain with G-Cter in ubiquitin).

Belongs to the histone H2B family. In terms of assembly, the nucleosome is a histone octamer containing two molecules each of H2A, H2B, H3 and H4 assembled in one H3-H4 heterotetramer and two H2A-H2B heterodimers. The octamer wraps approximately 147 bp of DNA. Monoubiquitination of Lys-118 gives a specific tag for epigenetic transcriptional activation and is also prerequisite for histone H3 'Lys-4' and 'Lys-79' methylation. Post-translationally, glcNAcylation at Ser-110 promotes monoubiquitination of Lys-118. It fluctuates in response to extracellular glucose, and associates with transcribed genes.

Its subcellular location is the nucleus. The protein resides in the chromosome. In terms of biological role, core component of nucleosome. Nucleosomes wrap and compact DNA into chromatin, limiting DNA accessibility to the cellular machineries which require DNA as a template. Histones thereby play a central role in transcription regulation, DNA repair, DNA replication and chromosomal stability. DNA accessibility is regulated via a complex set of post-translational modifications of histones, also called histone code, and nucleosome remodeling. The polypeptide is Probable histone H2B 4 (his-48) (Caenorhabditis elegans).